The primary structure comprises 298 residues: uncharacterized protein (298 aa).

10 consecutive transmembrane segments (helical) span residues 5–25 (ILFG…MSAF), 36–56 (MENV…IYPF), 76–96 (VVVG…ISLA), 97–117 (TATA…PLLL), 124–144 (SALI…DPSV), 147–167 (VGLV…LAYI), 181–201 (VILA…FIDI), 216–236 (ILWI…LTYA), 244–264 (IIAP…LYLG), and 272–292 (SSLG…PALL). The EamA 1 domain occupies 17–141 (LCFGIMSAFV…GLVGVVLISD (125 aa)). Residues 183–288 (LAFAFGMSLL…ILCSGLLIAL (106 aa)) enclose the EamA 2 domain.

This sequence belongs to the EamA transporter family.

It localises to the cell membrane. This is an uncharacterized protein from Helicobacter pylori (strain J99 / ATCC 700824) (Campylobacter pylori J99).